The chain runs to 72 residues: Multiple antibiotic resistance protein MarB (72 aa).

The chain is Multiple antibiotic resistance protein MarB (marB) from Escherichia coli (strain K12).